The sequence spans 95 residues: Aspartyl/glutamyl-tRNA(Asn/Gln) amidotransferase subunit C (95 aa).

This sequence belongs to the GatC family. As to quaternary structure, heterotrimer of A, B and C subunits.

It catalyses the reaction L-glutamyl-tRNA(Gln) + L-glutamine + ATP + H2O = L-glutaminyl-tRNA(Gln) + L-glutamate + ADP + phosphate + H(+). The enzyme catalyses L-aspartyl-tRNA(Asn) + L-glutamine + ATP + H2O = L-asparaginyl-tRNA(Asn) + L-glutamate + ADP + phosphate + 2 H(+). In terms of biological role, allows the formation of correctly charged Asn-tRNA(Asn) or Gln-tRNA(Gln) through the transamidation of misacylated Asp-tRNA(Asn) or Glu-tRNA(Gln) in organisms which lack either or both of asparaginyl-tRNA or glutaminyl-tRNA synthetases. The reaction takes place in the presence of glutamine and ATP through an activated phospho-Asp-tRNA(Asn) or phospho-Glu-tRNA(Gln). This is Aspartyl/glutamyl-tRNA(Asn/Gln) amidotransferase subunit C from Hyphomonas neptunium (strain ATCC 15444).